A 579-amino-acid chain; its full sequence is Potassium-transporting ATPase potassium-binding subunit (579 aa).

10 consecutive transmembrane segments (helical) span residues 1 to 21 (MISNSVIQIGIFLVVLMACVV), 64 to 84 (HYALALLGFNAMGMLLLYGLQ), 135 to 155 (GLTVQNFVSAATGMAVLIGLI), 178 to 198 (IYILLPLALVLSVTLVSQGVV), 265 to 285 (FLELLSILLIPAALCYTFGLM), 293 to 313 (WAILATMTIILLGFTVLAVSA), 398 to 418 (GLYGMLIFAIIAVFVAGLMVG), 435 to 455 (MAALIILIPCVMTLLITAIAV), 503 to 523 (WLGIAMLVSRFWLIVPTLAIA), and 549 to 569 (LLIGVVLIVGALTFIPALALG).

Belongs to the KdpA family. The system is composed of three essential subunits: KdpA, KdpB and KdpC.

Its subcellular location is the cell membrane. In terms of biological role, part of the high-affinity ATP-driven potassium transport (or Kdp) system, which catalyzes the hydrolysis of ATP coupled with the electrogenic transport of potassium into the cytoplasm. This subunit binds the extracellular potassium ions and delivers the ions to the membrane domain of KdpB through an intramembrane tunnel. This Herpetosiphon aurantiacus (strain ATCC 23779 / DSM 785 / 114-95) protein is Potassium-transporting ATPase potassium-binding subunit.